The following is a 118-amino-acid chain: NADH-ubiquinone oxidoreductase chain 3 (118 aa).

Helical transmembrane passes span 7-27 and 87-107; these read ICIY…LPFL and IDPF…IGSL.

It belongs to the complex I subunit 3 family.

Its subcellular location is the mitochondrion membrane. The enzyme catalyses a ubiquinone + NADH + 5 H(+)(in) = a ubiquinol + NAD(+) + 4 H(+)(out). Functionally, core subunit of the mitochondrial membrane respiratory chain NADH dehydrogenase (Complex I) that is believed to belong to the minimal assembly required for catalysis. Complex I functions in the transfer of electrons from NADH to the respiratory chain. The immediate electron acceptor for the enzyme is believed to be ubiquinone. The sequence is that of NADH-ubiquinone oxidoreductase chain 3 (ND3) from Solanum tuberosum (Potato).